A 547-amino-acid polypeptide reads, in one-letter code: MAAKDVKFGNDARVKMLAGVNILADAVKVTLGPKGRNVVLDKSFGAPTITKDGVSVAREIELEDKFENMGAQMVKEVASKANDAAGDGTTTATVLAQAIVNEGLKAVAAGMNPMDLKRGIDKAVTAVVTELKALSKPCETSKEIEQVGTISANSDSIVGQIIAQAMDKVGKEGVITVEDGTGLEDELAVVEGMQFDRGYLSPYFINKPETATVELDNPFILLVDKKVSNIRELLPVLEGVAKAGKPLLIIAEDVEGEALATLVVNTMRGIVKVAAVKAPGFGDRRKAMLQDIAILTAGTVISEEIGMELEKATLEDLGQAKRVVINKDNTTIIDGIGDEAQIQGRVAQIRQQIEESTSDYDKEKLQERVAKLAGGVAVIKVGAATEVEMKEKKARVEDALHATRAAVEEGIVAGGGVALIRAASKVAGLQGDNEEQNVGIKLALRAMEAPLRQIVANAGEEASIVASAVKNGEGNFGYNAGTEQYGDMIEMGILDPTKVTRSALQFAASVAGLMITTECMVTDLPKEDKADLGAAGMGGMGGMGGMM.

Residues 30-33 (TLGP), lysine 51, 87-91 (DGTTT), glycine 415, and aspartate 495 contribute to the ATP site.

It belongs to the chaperonin (HSP60) family. As to quaternary structure, forms a cylinder of 14 subunits composed of two heptameric rings stacked back-to-back. Interacts with the co-chaperonin GroES.

Its subcellular location is the cytoplasm. It catalyses the reaction ATP + H2O + a folded polypeptide = ADP + phosphate + an unfolded polypeptide.. Its function is as follows. Together with its co-chaperonin GroES, plays an essential role in assisting protein folding. The GroEL-GroES system forms a nano-cage that allows encapsulation of the non-native substrate proteins and provides a physical environment optimized to promote and accelerate protein folding. In Pasteurella multocida (strain Pm70), this protein is Chaperonin GroEL.